The chain runs to 244 residues: Putative B3 domain-containing protein At2g31460 (244 aa).

Positions 49 to 147 (SSMHMENSGF…PVHDGVNLSG (99 aa)) form a DNA-binding region, TF-B3. Disordered stretches follow at residues 175–196 (DGNLPQDSGHDGHNDNLPQDSV) and 217–244 (DSQGYLPDEDEDFGFNDDGSIRDSGHYQ). Basic and acidic residues predominate over residues 235-244 (GSIRDSGHYQ).

It localises to the nucleus. This Arabidopsis thaliana (Mouse-ear cress) protein is Putative B3 domain-containing protein At2g31460.